The sequence spans 303 residues: Sulfate adenylyltransferase subunit 2 (303 aa).

This sequence belongs to the PAPS reductase family. CysD subfamily. Heterodimer composed of CysD, the smaller subunit, and CysN.

It carries out the reaction sulfate + ATP + H(+) = adenosine 5'-phosphosulfate + diphosphate. The protein operates within sulfur metabolism; hydrogen sulfide biosynthesis; sulfite from sulfate: step 1/3. Its function is as follows. With CysN forms the ATP sulfurylase (ATPS) that catalyzes the adenylation of sulfate producing adenosine 5'-phosphosulfate (APS) and diphosphate, the first enzymatic step in sulfur assimilation pathway. APS synthesis involves the formation of a high-energy phosphoric-sulfuric acid anhydride bond driven by GTP hydrolysis by CysN coupled to ATP hydrolysis by CysD. In Sulfurimonas denitrificans (strain ATCC 33889 / DSM 1251) (Thiomicrospira denitrificans (strain ATCC 33889 / DSM 1251)), this protein is Sulfate adenylyltransferase subunit 2.